We begin with the raw amino-acid sequence, 354 residues long: UDP-N-acetylglucosamine--N-acetylmuramyl-(pentapeptide) pyrophosphoryl-undecaprenol N-acetylglucosamine transferase (354 aa).

UDP-N-acetyl-alpha-D-glucosamine-binding positions include 11–13, Arg-164, Ser-194, and Gln-289; that span reads TAG.

This sequence belongs to the glycosyltransferase 28 family. MurG subfamily.

It localises to the cell membrane. The catalysed reaction is di-trans,octa-cis-undecaprenyl diphospho-N-acetyl-alpha-D-muramoyl-L-alanyl-D-glutamyl-meso-2,6-diaminopimeloyl-D-alanyl-D-alanine + UDP-N-acetyl-alpha-D-glucosamine = di-trans,octa-cis-undecaprenyl diphospho-[N-acetyl-alpha-D-glucosaminyl-(1-&gt;4)]-N-acetyl-alpha-D-muramoyl-L-alanyl-D-glutamyl-meso-2,6-diaminopimeloyl-D-alanyl-D-alanine + UDP + H(+). The protein operates within cell wall biogenesis; peptidoglycan biosynthesis. Its function is as follows. Cell wall formation. Catalyzes the transfer of a GlcNAc subunit on undecaprenyl-pyrophosphoryl-MurNAc-pentapeptide (lipid intermediate I) to form undecaprenyl-pyrophosphoryl-MurNAc-(pentapeptide)GlcNAc (lipid intermediate II). The polypeptide is UDP-N-acetylglucosamine--N-acetylmuramyl-(pentapeptide) pyrophosphoryl-undecaprenol N-acetylglucosamine transferase (Clostridium botulinum (strain Kyoto / Type A2)).